Reading from the N-terminus, the 180-residue chain is uncharacterized protein (180 aa).

The next 6 membrane-spanning stretches (helical) occupy residues 4-24 (KSNIKLILATDLLAVLILSLF), 25-45 (IKNFKMVLAFLLAVFVIWLFI), 57-77 (NLLAMSVGFIEGILIFLGIIY), 81-101 (FLDITLGIFAILILIVMGILF), 124-144 (FLTLISIFGMLLTIYVFLLIL), and 156-176 (IIRTIMLVITANMFIIEFYTF).

It localises to the cell membrane. This is an uncharacterized protein from Methanocaldococcus jannaschii (strain ATCC 43067 / DSM 2661 / JAL-1 / JCM 10045 / NBRC 100440) (Methanococcus jannaschii).